The chain runs to 343 residues: Aspartate carbamoyltransferase catalytic subunit (343 aa).

Residues Arg91 and Thr92 each contribute to the carbamoyl phosphate site. Lys119 provides a ligand contact to L-aspartate. Residues Arg141, His171, and Gln174 each coordinate carbamoyl phosphate. Positions 204 and 259 each coordinate L-aspartate. Gly300 and Pro301 together coordinate carbamoyl phosphate.

It belongs to the aspartate/ornithine carbamoyltransferase superfamily. ATCase family. As to quaternary structure, heterododecamer (2C3:3R2) of six catalytic PyrB chains organized as two trimers (C3), and six regulatory PyrI chains organized as three dimers (R2).

It carries out the reaction carbamoyl phosphate + L-aspartate = N-carbamoyl-L-aspartate + phosphate + H(+). The protein operates within pyrimidine metabolism; UMP biosynthesis via de novo pathway; (S)-dihydroorotate from bicarbonate: step 2/3. Functionally, catalyzes the condensation of carbamoyl phosphate and aspartate to form carbamoyl aspartate and inorganic phosphate, the committed step in the de novo pyrimidine nucleotide biosynthesis pathway. This Burkholderia multivorans (strain ATCC 17616 / 249) protein is Aspartate carbamoyltransferase catalytic subunit.